We begin with the raw amino-acid sequence, 313 residues long: Methionyl-tRNA formyltransferase (313 aa).

(6S)-5,6,7,8-tetrahydrofolate is bound at residue 113–116 (SLLP).

Belongs to the Fmt family.

The enzyme catalyses L-methionyl-tRNA(fMet) + (6R)-10-formyltetrahydrofolate = N-formyl-L-methionyl-tRNA(fMet) + (6S)-5,6,7,8-tetrahydrofolate + H(+). Attaches a formyl group to the free amino group of methionyl-tRNA(fMet). The formyl group appears to play a dual role in the initiator identity of N-formylmethionyl-tRNA by promoting its recognition by IF2 and preventing the misappropriation of this tRNA by the elongation apparatus. The protein is Methionyl-tRNA formyltransferase of Francisella tularensis subsp. mediasiatica (strain FSC147).